We begin with the raw amino-acid sequence, 244 residues long: Carbonic anhydrase (244 aa).

An N-terminal signal peptide occupies residues 1–19; it reads MKGKLSIALMLSVCFSASA. An Alpha-carbonic anhydrase domain is found at 23–244; the sequence is VHWGYEGNGD…QPLNGRIIIH (222 aa). Residues cysteine 46 and cysteine 199 are joined by a disulfide bond. Catalysis depends on histidine 84, which acts as the Proton acceptor. Positions 109, 111, and 128 each coordinate Zn(2+). Substrate is bound at residue 195–196; it reads TT.

This sequence belongs to the alpha-carbonic anhydrase family. Zn(2+) is required as a cofactor.

It is found in the periplasm. It carries out the reaction hydrogencarbonate + H(+) = CO2 + H2O. Functionally, reversible hydration of carbon dioxide. The protein is Carbonic anhydrase (cah) of Pectobacterium carotovorum (Erwinia carotovora).